The chain runs to 478 residues: Methylenetetrahydrofolate--tRNA-(uracil-5-)-methyltransferase TrmFO (478 aa).

16-21 (GAGLAG) contacts FAD. Residues 429 to 448 (PLANPPTKGPDGKRLRGPEK) are disordered. A compositionally biased stretch (basic and acidic residues) spans 438–448 (PDGKRLRGPEK).

Belongs to the MnmG family. TrmFO subfamily. FAD is required as a cofactor.

It localises to the cytoplasm. It carries out the reaction uridine(54) in tRNA + (6R)-5,10-methylene-5,6,7,8-tetrahydrofolate + NADH + H(+) = 5-methyluridine(54) in tRNA + (6S)-5,6,7,8-tetrahydrofolate + NAD(+). It catalyses the reaction uridine(54) in tRNA + (6R)-5,10-methylene-5,6,7,8-tetrahydrofolate + NADPH + H(+) = 5-methyluridine(54) in tRNA + (6S)-5,6,7,8-tetrahydrofolate + NADP(+). Functionally, catalyzes the folate-dependent formation of 5-methyl-uridine at position 54 (M-5-U54) in all tRNAs. This chain is Methylenetetrahydrofolate--tRNA-(uracil-5-)-methyltransferase TrmFO, found in Rhodopseudomonas palustris (strain ATCC BAA-98 / CGA009).